A 319-amino-acid polypeptide reads, in one-letter code: Ferrochelatase (319 aa).

His-193 and Glu-274 together coordinate Fe cation.

This sequence belongs to the ferrochelatase family.

The protein localises to the cytoplasm. It catalyses the reaction heme b + 2 H(+) = protoporphyrin IX + Fe(2+). Its pathway is porphyrin-containing compound metabolism; protoheme biosynthesis; protoheme from protoporphyrin-IX: step 1/1. Functionally, catalyzes the ferrous insertion into protoporphyrin IX. This Actinobacillus pleuropneumoniae serotype 5b (strain L20) protein is Ferrochelatase.